Here is a 315-residue protein sequence, read N- to C-terminus: NAD(P)H-dependent anabolic L-arginine dehydrogenase DauB (315 aa).

It belongs to the ornithine cyclodeaminase/mu-crystallin family.

It carries out the reaction L-arginine + NAD(+) + H2O = 5-guanidino-2-oxopentanoate + NH4(+) + NADH + H(+). The catalysed reaction is L-arginine + NADP(+) + H2O = 5-guanidino-2-oxopentanoate + NH4(+) + NADPH + H(+). Its function is as follows. Involved in the anabolism of D-lysine and D-arginine. Under aerobic conditions, the arginine succinyltransferase (AST) and arginine transaminase (ATA) pathways are 2 major routes for L-arginine utilization as the sole source of carbon and nitrogen. The D-to-L racemization of arginine by DauA and DauB is necessary, before to be channeled into the AST and/or ATA pathways. DauB catalyzes the synthesis of L-arginine from 2-ketoarginine (2-KA) and ammonium. The sequence is that of NAD(P)H-dependent anabolic L-arginine dehydrogenase DauB from Pseudomonas aeruginosa (strain ATCC 15692 / DSM 22644 / CIP 104116 / JCM 14847 / LMG 12228 / 1C / PRS 101 / PAO1).